The primary structure comprises 241 residues: Attacin-C (241 aa).

The first 21 residues, 1 to 21 (MSKIVLLIVVIVGVLGSLAVA), serve as a signal peptide directing secretion. The propeptide occupies 22–23 (LP). Position 24 is a pyrrolidone carboxylic acid (Gln-24). Thr-39 is a glycosylation site (O-linked (GalNAc...) threonine). Ser-127 carries the post-translational modification Phosphoserine.

Belongs to the attacin/sarcotoxin-2 family. Hemolymph (at protein level).

The protein localises to the secreted. Has antimicrobial activity in synergy with other peptides. Strongest activity observed against E.cloacae. This chain is Attacin-C, found in Drosophila melanogaster (Fruit fly).